We begin with the raw amino-acid sequence, 891 residues long: Probable serine/threonine-protein kinase mkcC (891 aa).

Disordered stretches follow at residues 24–70, 85–121, 264–435, 495–526, and 565–588; these read IELN…TATI, ANNNTNQLNKSTSSSSSLNNNKNEDNKSVTASIAPSS, DDPQ…AREK, NSLGSSINKNNSNNTTTTTTTTNTNNKSPEVS, and TTASQSSQAPYHPSHNGNEEDDYD. Residues 29–41 show a composition bias toward low complexity; the sequence is QEEQQQPEQQEQP. A compositionally biased stretch (basic and acidic residues) spans 45 to 58; it reads EELKDNNEKIKTSE. Low complexity-rich tracts occupy residues 61 to 70, 86 to 105, 297 to 314, 322 to 360, and 379 to 397; these read TTTTTTTATI, NNNTNQLNKSTSSSSSLNNN, STSNTTGKNTGKNSTTGK, SNSSNVPPSPVLASSASPSPKLKSSSSSIRNSGAISGTS, and TTGNSTTTTTTTTSTTTSS. Over residues 422–432 the composition is skewed to basic residues; the sequence is RKRKEQKRSRA. Positions 495 to 522 are enriched in low complexity; it reads NSLGSSINKNNSNNTTTTTTTTNTNNKS. The region spanning 616-864 is the Protein kinase domain; it reads YKNLKQIGSG…AEQLLKHPWI (249 aa). ATP is bound by residues 622–630 and K645; that span reads IGSGGFGSV. The Proton acceptor role is filled by D735.

The protein belongs to the protein kinase superfamily. STE Ser/Thr protein kinase family. STE20 subfamily. It depends on Mg(2+) as a cofactor.

It catalyses the reaction L-seryl-[protein] + ATP = O-phospho-L-seryl-[protein] + ADP + H(+). It carries out the reaction L-threonyl-[protein] + ATP = O-phospho-L-threonyl-[protein] + ADP + H(+). This is Probable serine/threonine-protein kinase mkcC from Dictyostelium discoideum (Social amoeba).